The primary structure comprises 224 residues: 3-dehydroquinate dehydratase (224 aa).

Residues 35 to 37 and Arg65 each bind 3-dehydroquinate; that span reads EFR. Catalysis depends on His120, which acts as the Proton donor/acceptor. The Schiff-base intermediate with substrate role is filled by Lys146. 3-dehydroquinate contacts are provided by Arg183, Thr202, and Gln206.

It belongs to the type-I 3-dehydroquinase family. In terms of assembly, homodimer.

The catalysed reaction is 3-dehydroquinate = 3-dehydroshikimate + H2O. Its pathway is metabolic intermediate biosynthesis; chorismate biosynthesis; chorismate from D-erythrose 4-phosphate and phosphoenolpyruvate: step 3/7. Its function is as follows. Involved in the third step of the chorismate pathway, which leads to the biosynthesis of aromatic amino acids. Catalyzes the cis-dehydration of 3-dehydroquinate (DHQ) and introduces the first double bond of the aromatic ring to yield 3-dehydroshikimate. The chain is 3-dehydroquinate dehydratase from Methanobrevibacter smithii (strain ATCC 35061 / DSM 861 / OCM 144 / PS).